The following is a 930-amino-acid chain: Endoplasmic reticulum aminopeptidase 1 (930 aa).

Residues 1 to 2 are Cytoplasmic-facing; that stretch reads MP. A helical; Signal-anchor for type II membrane protein transmembrane segment spans residues 3–23; sequence SLLPLVLTFLSVSSPSWCQNS. Residues 24 to 930 lie on the Lumenal side of the membrane; it reads DIESLKASNG…WLQKEKPELL (907 aa). 2 N-linked (GlcNAc...) asparagine glycosylation sites follow: Asn59 and Asn143. Residues Glu172 and 306-310 each bind substrate; that span reads GAMEN. His342 lines the Zn(2+) pocket. Glu343 is a catalytic residue. Residues His346 and Glu365 each contribute to the Zn(2+) site. The cysteines at positions 393 and 432 are disulfide-linked. Asn403 and Asn655 each carry an N-linked (GlcNAc...) asparagine glycan. Cys725 and Cys732 are joined by a disulfide. N-linked (GlcNAc...) asparagine glycans are attached at residues Asn749 and Asn890.

This sequence belongs to the peptidase M1 family. Monomer. May also exist as a heterodimer; with ERAP2. Interacts with RBMX. It depends on Zn(2+) as a cofactor. Post-translationally, N-glycosylated.

It localises to the endoplasmic reticulum membrane. Functionally, aminopeptidase that plays a central role in peptide trimming, a step required for the generation of most HLA class I-binding peptides. Peptide trimming is essential to customize longer precursor peptides to fit them to the correct length required for presentation on MHC class I molecules. Strongly prefers substrates 9-16 residues long. Rapidly degrades 13-mer to a 9-mer and then stops. Preferentially hydrolyzes the residue Leu and peptides with a hydrophobic C-terminus, while it has weak activity toward peptides with charged C-terminus. May play a role in the inactivation of peptide hormones. May be involved in the regulation of blood pressure through the inactivation of angiotensin II and/or the generation of bradykinin in the kidney. This is Endoplasmic reticulum aminopeptidase 1 (Erap1) from Mus musculus (Mouse).